A 73-amino-acid chain; its full sequence is Waprin-Phi2 (73 aa).

The signal sequence occupies residues 1–21 (MKATLLLLLLFAVILPGTISA). The WAP domain occupies 22 to 72 (EQEKPGSCPNVDMPIPPLGLCKTTCSKDSDCSETKKCCKNGCGFMTCTTAR). Intrachain disulfides connect cysteine 29–cysteine 59, cysteine 42–cysteine 63, cysteine 46–cysteine 58, and cysteine 52–cysteine 68.

Belongs to the venom waprin family. Expressed by the venom gland.

It localises to the secreted. Functionally, damages membranes of susceptible bacteria. Has no hemolytic activity. Not toxic to mice. Does not inhibit the proteinases elastase and cathepsin G. The sequence is that of Waprin-Phi2 from Philodryas olfersii (Green snake).